Consider the following 393-residue polypeptide: NAD(P)H-quinone oxidoreductase subunit H, chloroplastic (393 aa).

Belongs to the complex I 49 kDa subunit family. NDH is composed of at least 16 different subunits, 5 of which are encoded in the nucleus.

It localises to the plastid. It is found in the chloroplast thylakoid membrane. It catalyses the reaction a plastoquinone + NADH + (n+1) H(+)(in) = a plastoquinol + NAD(+) + n H(+)(out). It carries out the reaction a plastoquinone + NADPH + (n+1) H(+)(in) = a plastoquinol + NADP(+) + n H(+)(out). NDH shuttles electrons from NAD(P)H:plastoquinone, via FMN and iron-sulfur (Fe-S) centers, to quinones in the photosynthetic chain and possibly in a chloroplast respiratory chain. The immediate electron acceptor for the enzyme in this species is believed to be plastoquinone. Couples the redox reaction to proton translocation, and thus conserves the redox energy in a proton gradient. The chain is NAD(P)H-quinone oxidoreductase subunit H, chloroplastic from Barbarea verna (Land cress).